The following is a 215-amino-acid chain: 3-demethoxyubiquinol 3-hydroxylase (215 aa).

Residues E64, E94, H97, E146, E178, and H181 each contribute to the Fe cation site.

This sequence belongs to the COQ7 family. The cofactor is Fe cation.

It localises to the cell membrane. The catalysed reaction is a 5-methoxy-2-methyl-3-(all-trans-polyprenyl)benzene-1,4-diol + AH2 + O2 = a 3-demethylubiquinol + A + H2O. Its pathway is cofactor biosynthesis; ubiquinone biosynthesis. Functionally, catalyzes the hydroxylation of 2-nonaprenyl-3-methyl-6-methoxy-1,4-benzoquinol during ubiquinone biosynthesis. This chain is 3-demethoxyubiquinol 3-hydroxylase, found in Ectopseudomonas mendocina (strain ymp) (Pseudomonas mendocina).